A 282-amino-acid polypeptide reads, in one-letter code: Bifunctional protein FolD (282 aa).

Residues 166 to 168 (GRS) and Ser-191 contribute to the NADP(+) site.

Belongs to the tetrahydrofolate dehydrogenase/cyclohydrolase family. In terms of assembly, homodimer.

The catalysed reaction is (6R)-5,10-methylene-5,6,7,8-tetrahydrofolate + NADP(+) = (6R)-5,10-methenyltetrahydrofolate + NADPH. The enzyme catalyses (6R)-5,10-methenyltetrahydrofolate + H2O = (6R)-10-formyltetrahydrofolate + H(+). Its pathway is one-carbon metabolism; tetrahydrofolate interconversion. Catalyzes the oxidation of 5,10-methylenetetrahydrofolate to 5,10-methenyltetrahydrofolate and then the hydrolysis of 5,10-methenyltetrahydrofolate to 10-formyltetrahydrofolate. In Acidovorax sp. (strain JS42), this protein is Bifunctional protein FolD.